Consider the following 285-residue polypeptide: MATIIDGKAIAEKIRADLAAQVKELQSRGITPGLATVLVGSDPASEVYVRMKGDACNKLGMHSVKITRPAETTEEELLALINELNNDPAIHGILVQLPLPPQINADRVLEAISPAKDVDGFHPYNVGRLVTGKPTFQPCTPYGVMVMLQEAGVDLAGKEVVVVGRSNIVGKPVALMCLQRNATVTICHSKTRDLPGRVRAADVVIAAVGVPEMIKGDWIKEGAVVIDVGVNRVGEKKLVGDVEFAAAAERASAITPVPGGVGPMTITMLLHNTLEAAKMAGSGNR.

Residues 164–166 (GRS), Ser-189, and Val-230 each bind NADP(+).

This sequence belongs to the tetrahydrofolate dehydrogenase/cyclohydrolase family. In terms of assembly, homodimer.

The catalysed reaction is (6R)-5,10-methylene-5,6,7,8-tetrahydrofolate + NADP(+) = (6R)-5,10-methenyltetrahydrofolate + NADPH. The enzyme catalyses (6R)-5,10-methenyltetrahydrofolate + H2O = (6R)-10-formyltetrahydrofolate + H(+). It functions in the pathway one-carbon metabolism; tetrahydrofolate interconversion. In terms of biological role, catalyzes the oxidation of 5,10-methylenetetrahydrofolate to 5,10-methenyltetrahydrofolate and then the hydrolysis of 5,10-methenyltetrahydrofolate to 10-formyltetrahydrofolate. The polypeptide is Bifunctional protein FolD 2 (Geobacter sulfurreducens (strain ATCC 51573 / DSM 12127 / PCA)).